Reading from the N-terminus, the 32-residue chain is Dermaseptin-8 (32 aa).

Q32 is subject to Glutamine amide.

As to expression, expressed by the skin glands.

It localises to the secreted. In terms of biological role, antimicrobial peptide, active against the Gram-positive bacterium S.aureus, and the Gram-negative bacteriun E.coli. Has hemolytic activity at 432 uM. The protein is Dermaseptin-8 of Phyllomedusa tarsius (Brownbelly leaf frog).